A 240-amino-acid polypeptide reads, in one-letter code: UDP-2,3-diacylglucosamine hydrolase (240 aa).

Mn(2+) is bound by residues Asp-8, His-10, Asp-41, Asn-79, and His-114. Residue 79–80 (NR) coordinates substrate. Substrate-binding residues include Asp-122, Ser-160, Asn-164, Lys-167, and His-195. Mn(2+) contacts are provided by His-195 and His-197.

The protein belongs to the LpxH family. It depends on Mn(2+) as a cofactor.

The protein localises to the cell inner membrane. The catalysed reaction is UDP-2-N,3-O-bis[(3R)-3-hydroxytetradecanoyl]-alpha-D-glucosamine + H2O = 2-N,3-O-bis[(3R)-3-hydroxytetradecanoyl]-alpha-D-glucosaminyl 1-phosphate + UMP + 2 H(+). Its pathway is glycolipid biosynthesis; lipid IV(A) biosynthesis; lipid IV(A) from (3R)-3-hydroxytetradecanoyl-[acyl-carrier-protein] and UDP-N-acetyl-alpha-D-glucosamine: step 4/6. In terms of biological role, hydrolyzes the pyrophosphate bond of UDP-2,3-diacylglucosamine to yield 2,3-diacylglucosamine 1-phosphate (lipid X) and UMP by catalyzing the attack of water at the alpha-P atom. Involved in the biosynthesis of lipid A, a phosphorylated glycolipid that anchors the lipopolysaccharide to the outer membrane of the cell. The sequence is that of UDP-2,3-diacylglucosamine hydrolase from Salmonella typhi.